Consider the following 1960-residue polypeptide: Myosin-9 (1960 aa).

Position 2 is an N-acetylalanine (Ala-2). Residues 2–838 (AQQAADKYLY…RLFTKVKPLL (837 aa)) form a mediates interaction with LIMCH1 region. Lys-8 carries the post-translational modification N6-acetyllysine. The residue at position 11 (Tyr-11) is a Phosphotyrosine. The 51-residue stretch at 27–77 (AAKKLVWVPSDKSGFEPASLKEEVGEEAIVELVENGKKVKVNKDDIQKMNP) folds into the Myosin N-terminal SH3-like domain. The region spanning 81 to 776 (SKVEDMAELT…VLAHLEEERD (696 aa)) is the Myosin motor domain. N6-acetyllysine is present on Lys-102. 174-181 (GESGAGKT) is an ATP binding site. N6-acetyllysine is present on residues Lys-299, Lys-435, and Lys-613. Ser-628 is subject to Phosphoserine. Residues 654–676 (LAKLMATLRNTNPNFVRCIIPNH) are actin-binding. Tyr-754 is subject to Phosphotyrosine. Residues 779–808 (ITDVIIGFQACCRGYLARKAFAKRQQQLTA) enclose the IQ domain. The stretch at 837 to 1926 (LLQVSRQEEE…LKNKLRRGDL (1090 aa)) forms a coiled coil. Lys-850 is modified (N6-succinyllysine). An N6-acetyllysine mark is found at Lys-860, Lys-975, and Lys-1024. The span at 1035-1055 (RLRREEKQRQELEKTRRKLEG) shows a compositional bias: basic and acidic residues. Residues 1035–1057 (RLRREEKQRQELEKTRRKLEGDS) are disordered. Ser-1114 bears the Phosphoserine mark. Residues 1118 to 1137 (EDLESERASRNKAEKQKRDL) form a disordered region. The segment covering 1122 to 1137 (SERASRNKAEKQKRDL) has biased composition (basic and acidic residues). Lys-1234, Lys-1249, Lys-1357, Lys-1392, Lys-1404, Lys-1410, Lys-1459, and Lys-1638 each carry N6-acetyllysine. N6-succinyllysine is present on Lys-1669. A Phosphoserine modification is found at Ser-1714. N6-acetyllysine is present on residues Lys-1793, Lys-1802, and Lys-1845. The disordered stretch occupies residues 1877–1960 (RQLEEAEEEA…ADGAEAKPAE (84 aa)). Arg-1923 is modified (omega-N-methylarginine). Ser-1943 is subject to Phosphoserine. Over residues 1948–1960 (DGKADGAEAKPAE) the composition is skewed to basic and acidic residues.

The protein belongs to the TRAFAC class myosin-kinesin ATPase superfamily. Myosin family. In terms of assembly, myosin is a hexameric protein that consists of 2 heavy chain subunits (MHC), 2 alkali light chain subunits (MLC) and 2 regulatory light chain subunits (MLC-2). Interacts with RASIP1. Interacts with DDR1. Interacts with PDLIM2. Interacts with SVIL. Interacts with HTRA3. Interacts with Myo7a. Interacts with CFAP95. Interacts with LIMCH1; independently of the integration of MYH9 into the myosin complex. Interacts with RAB3A. Interacts with ZBED4. Interacts with S100A4; this interaction increases cell motility. As to quaternary structure, (Microbial infection) Interacts with herpes simplex virus 1/HHV-1 envelope glycoprotein B. In terms of processing, ISGylated. Post-translationally, ubiquitination. In the kidney, expressed in the glomeruli. Also expressed in leukocytes.

The protein resides in the cytoplasm. It localises to the cytoskeleton. It is found in the cell cortex. The protein localises to the cytoplasmic vesicle. Its subcellular location is the secretory vesicle. The protein resides in the cortical granule. It localises to the cell membrane. In terms of biological role, cellular myosin that appears to play a role in cytokinesis, cell shape, and specialized functions such as secretion and capping. Required for cortical actin clearance prior to oocyte exocytosis. Promotes cell motility in conjunction with S100A4. During cell spreading, plays an important role in cytoskeleton reorganization, focal contact formation (in the margins but not the central part of spreading cells), and lamellipodial retraction; this function is mechanically antagonized by MYH10. (Microbial infection) Acts as a receptor for herpes simplex virus 1/HHV-1 envelope glycoprotein B. This is Myosin-9 (MYH9) from Homo sapiens (Human).